We begin with the raw amino-acid sequence, 190 residues long: GTP cyclohydrolase 1 (190 aa).

Residues Cys-75, His-78, and Cys-146 each contribute to the Zn(2+) site.

Belongs to the GTP cyclohydrolase I family. Toroid-shaped homodecamer, composed of two pentamers of five dimers.

The enzyme catalyses GTP + H2O = 7,8-dihydroneopterin 3'-triphosphate + formate + H(+). It functions in the pathway cofactor biosynthesis; 7,8-dihydroneopterin triphosphate biosynthesis; 7,8-dihydroneopterin triphosphate from GTP: step 1/1. This Campylobacter jejuni subsp. doylei (strain ATCC BAA-1458 / RM4099 / 269.97) protein is GTP cyclohydrolase 1.